A 242-amino-acid chain; its full sequence is Caffeoyl-CoA O-methyltransferase 3 (242 aa).

Substrate is bound at residue Lys-16. Residues Thr-58, Glu-80, Gly-82–Val-83, Ser-88, Asp-106, and Ala-135 contribute to the S-adenosyl-L-methionine site. Residue Asp-158 participates in substrate binding. Asp-158 provides a ligand contact to a divalent metal cation. Asp-160 serves as a coordination point for S-adenosyl-L-methionine. Residues Asp-184 and Asn-185 each coordinate a divalent metal cation. A substrate-binding site is contributed by Asn-189.

It belongs to the class I-like SAM-binding methyltransferase superfamily. Cation-dependent O-methyltransferase family. CCoAMT subfamily. The cofactor is Mg(2+). In terms of tissue distribution, mostly expressed in the bottom and middle parts of the stems.

It carries out the reaction (E)-caffeoyl-CoA + S-adenosyl-L-methionine = (E)-feruloyl-CoA + S-adenosyl-L-homocysteine + H(+). Its pathway is aromatic compound metabolism; phenylpropanoid biosynthesis. In terms of biological role, methylates caffeoyl-CoA to feruloyl-CoA and 5-hydroxyferuloyl-CoA to sinapoyl-CoA. Plays a role in the synthesis of feruloylated polysaccharides. Involved in the reinforcement of the plant cell wall. Also involved in the responding to wounding or pathogen challenge by the increased formation of cell wall-bound ferulic acid polymers. Also methylates free caffeic and 5-hydroxyferulic acids. The protein is Caffeoyl-CoA O-methyltransferase 3 (CCOAOMT3) of Nicotiana tabacum (Common tobacco).